The primary structure comprises 557 residues: IgE-binding protein (557 aa).

Positions 113–172 (DGLGKPALSSSEAGEESSSEETDWEEEAAHYQPANWSRKKPKAAGEGQFADWPQGSRLQG) are disordered. The segment covering 125–138 (AGEESSSEETDWEE) has biased composition (acidic residues). Residues 344-534 (TAIRPGRRSR…TAAERHVQSQ (191 aa)) enclose the Integrase catalytic domain.

The sequence is that of IgE-binding protein (Iap) from Mus musculus (Mouse).